Consider the following 330-residue polypeptide: Cytoskeleton protein RodZ (330 aa).

The Cytoplasmic segment spans residues 1 to 111; the sequence is MNTEATQDHQ…LGKRRKKRDG (111 aa). The region spanning 19-71 is the HTH cro/C1-type domain; the sequence is LRHAREQLGLSQQAVAERLCLKVSTVRDIEDDKAPADLASTFLRGYIRSYARL. Positions 30–49 form a DNA-binding region, H-T-H motif; it reads QQAVAERLCLKVSTVRDIED. The chain crosses the membrane as a helical; Signal-anchor for type II membrane protein span at residues 112-132; that stretch reads WLMSFTWLVLFVVIGLSGAWW. Topologically, residues 133 to 330 are periplasmic; sequence WQDHKAQQEE…TLNAEQSPAQ (198 aa). Over residues 146 to 166 the composition is skewed to polar residues; the sequence is MADQSSAELNGGDANSQNVPL. A disordered region spans residues 146–237; it reads MADQSSAELN…ASPLPTDQAN (92 aa). Composition is skewed to low complexity over residues 176–202 and 216–233; these read TDSA…TPAD and TAGT…PLPT.

It belongs to the RodZ family.

The protein localises to the cell inner membrane. Its function is as follows. Cytoskeletal protein that is involved in cell-shape control through regulation of the length of the long axis. In Klebsiella pneumoniae (strain 342), this protein is Cytoskeleton protein RodZ.